The following is a 565-amino-acid chain: Pentatricopeptide repeat-containing protein At3g20730 (565 aa).

14 PPR repeats span residues serine 12–serine 46, asparagine 47–arginine 77, aspartate 78–alanine 112, asparagine 113–glycine 147, asparagine 148–arginine 178, aspartate 179–proline 213, aspartate 214–arginine 248, serine 249–arginine 279, aspartate 280–methionine 315, aspartate 316–phenylalanine 351, aspartate 352–lysine 382, aspartate 383–proline 417, asparagine 418–lysine 448, and arginine 454–isoleucine 484. The tract at residues threonine 491–tyrosine 565 is type E motif; degenerate.

This sequence belongs to the PPR family. PCMP-E subfamily.

The chain is Pentatricopeptide repeat-containing protein At3g20730 (PCMP-E94) from Arabidopsis thaliana (Mouse-ear cress).